A 138-amino-acid chain; its full sequence is ATP synthase epsilon chain (138 aa).

The protein belongs to the ATPase epsilon chain family. In terms of assembly, F-type ATPases have 2 components, CF(1) - the catalytic core - and CF(0) - the membrane proton channel. CF(1) has five subunits: alpha(3), beta(3), gamma(1), delta(1), epsilon(1). CF(0) has three main subunits: a, b and c.

It is found in the cell membrane. Its function is as follows. Produces ATP from ADP in the presence of a proton gradient across the membrane. The sequence is that of ATP synthase epsilon chain (atpC) from Buchnera aphidicola subsp. Acyrthosiphon pisum (strain APS) (Acyrthosiphon pisum symbiotic bacterium).